A 501-amino-acid polypeptide reads, in one-letter code: MSSSGTPDLPVLLTDLKFQYTKIFINNEWHDSVSGKKFPVFNPATEEKLCEVEEGDKEDVNKAVAAARQAFQIGSPWRTMDASERGRLLYKLADLVERDRLILATMESMNGGKLFSNAYLMDLGGCLKTLRYCAGWADKIQGRTIPSDGNFFTYTRHEPVGVCGQILPWNFPLLMFLWKIAPALSCGNTVVVKPAEQTPLSALHVATLIKEAGFPPGVVNIVPGYGPTAGAAISSHMDIDKVAFTGSTEVGKLIKEAAGKSNLKRVTLELGGKSPFIVFADADLETALEVTHQALFYHQGQCCVAASRLFVEESIYDEFVRRSVERAKKYVLGNPLTPGVSQGPQIDKEQYDKILDLIESGKKEGAKLECGGGPWGNKGYFIQPTVFSNVSDEMRIAKEEIFGPVQQIMKFKSLDDVIKRANNTTYGLFAGSFTKDLDKAITVSAALQAGTVWVNCYGVVSAQCPFGGFKMSGNGREMGEYGFHEYTEVKTVTVKISQKNS.

An N-acetylserine modification is found at Ser-2. An N6-acetyllysine mark is found at Lys-91 and Lys-128. Residues 167 to 170, 193 to 196, 226 to 227, and 246 to 247 each bind NAD(+); these read LPWN, KPAE, GP, and GS. Lys-252 is modified (N6-acetyllysine). Glu-269 functions as the Proton acceptor in the catalytic mechanism. An NAD(+)-binding site is contributed by 269-271; the sequence is ELG. The active-site Nucleophile is Cys-303. Residues 336 to 501 form a mediates interaction with PRMT3 region; that stretch reads LTPGVSQGPQ…VTVKISQKNS (166 aa). At Thr-337 the chain carries Phosphothreonine. 349–353 serves as a coordination point for NAD(+); sequence EQYDK. Lys-353 and Lys-367 each carry N6-acetyllysine. Residue 400–402 participates in NAD(+) binding; that stretch reads EIF. Lys-410 carries the N6-acetyllysine modification. Ser-413 carries the phosphoserine modification. N6-acetyllysine occurs at positions 419, 435, and 495.

It belongs to the aldehyde dehydrogenase family. In terms of assembly, homotetramer. Interacts with PRMT3; the interaction is direct, inhibits ALDH1A1 aldehyde dehydrogenase activity and is independent of the methyltransferase activity of PRMT3. The N-terminus is blocked most probably by acetylation.

The protein localises to the cytoplasm. It localises to the cytosol. The protein resides in the cell projection. It is found in the axon. It catalyses the reaction an aldehyde + NAD(+) + H2O = a carboxylate + NADH + 2 H(+). The enzyme catalyses all-trans-retinal + NAD(+) + H2O = all-trans-retinoate + NADH + 2 H(+). The catalysed reaction is 9-cis-retinal + NAD(+) + H2O = 9-cis-retinoate + NADH + 2 H(+). It carries out the reaction 11-cis-retinal + NAD(+) + H2O = 11-cis-retinoate + NADH + 2 H(+). It catalyses the reaction 13-cis-retinal + NAD(+) + H2O = 13-cis-retinoate + NADH + 2 H(+). The enzyme catalyses 3-deoxyglucosone + NAD(+) + H2O = 2-dehydro-3-deoxy-D-gluconate + NADH + 2 H(+). The catalysed reaction is (E)-4-hydroxynon-2-enal + NAD(+) + H2O = (E)-4-hydroxynon-2-enoate + NADH + 2 H(+). It carries out the reaction malonaldehyde + NAD(+) + H2O = 3-oxopropanoate + NADH + 2 H(+). It catalyses the reaction hexanal + NAD(+) + H2O = hexanoate + NADH + 2 H(+). The enzyme catalyses propanal + NAD(+) + H2O = propanoate + NADH + 2 H(+). The catalysed reaction is acetaldehyde + NAD(+) + H2O = acetate + NADH + 2 H(+). It carries out the reaction benzaldehyde + NAD(+) + H2O = benzoate + NADH + 2 H(+). It catalyses the reaction 4-aminobutanal + NAD(+) + H2O = 4-aminobutanoate + NADH + 2 H(+). The protein operates within cofactor metabolism; retinol metabolism. Its function is as follows. Cytosolic dehydrogenase that catalyzes the irreversible oxidation of a wide range of aldehydes to their corresponding carboxylic acid. Functions downstream of retinol dehydrogenases and catalyzes the oxidation of retinaldehyde into retinoic acid, the second step in the oxidation of retinol/vitamin A into retinoic acid. This pathway is crucial to control the levels of retinol and retinoic acid, two important molecules which excess can be teratogenic and cytotoxic. Also oxidizes aldehydes resulting from lipid peroxidation like (E)-4-hydroxynon-2-enal/HNE, malonaldehyde and hexanal that form protein adducts and are highly cytotoxic. By participating for instance to the clearance of (E)-4-hydroxynon-2-enal/HNE in the lens epithelium prevents the formation of HNE-protein adducts and lens opacification. Also functions downstream of fructosamine-3-kinase in the fructosamine degradation pathway by catalyzing the oxidation of 3-deoxyglucosone, the carbohydrate product of fructosamine 3-phosphate decomposition, which is itself a potent glycating agent that may react with lysine and arginine side-chains of proteins. Also has an aminobutyraldehyde dehydrogenase activity and is probably part of an alternative pathway for the biosynthesis of GABA/4-aminobutanoate in midbrain, thereby playing a role in GABAergic synaptic transmission. This chain is Aldehyde dehydrogenase 1A1, found in Equus caballus (Horse).